Consider the following 65-residue polypeptide: Large ribosomal subunit protein bL35 (65 aa).

A disordered region spans residues 1 to 22 (MPKIKTVRGAAKRFKKTGSGGF). A compositionally biased stretch (basic residues) spans 10–22 (AAKRFKKTGSGGF).

The protein belongs to the bacterial ribosomal protein bL35 family.

The protein is Large ribosomal subunit protein bL35 of Serratia proteamaculans (strain 568).